A 78-amino-acid chain; its full sequence is Apolipoprotein C-I (78 aa).

The N-terminal stretch at 1–26 is a signal peptide; it reads MRLILWLPVLVVVLLMVTEGPAPAQG.

It belongs to the apolipoprotein C1 family.

The protein localises to the secreted. Its function is as follows. Inhibitor of lipoprotein binding to the low density lipoprotein (LDL) receptor, LDL receptor-related protein, and very low density lipoprotein (VLDL) receptor. Associates with high density lipoproteins (HDL) and the triacylglycerol-rich lipoproteins in the plasma and makes up about 10% of the protein of the VLDL and 2% of that of HDL. Appears to interfere directly with fatty acid uptake and is also the major plasma inhibitor of cholesteryl ester transfer protein (CETP). Binds free fatty acids and reduces their intracellular esterification. Modulates the interaction of APOE with beta-migrating VLDL and inhibits binding of beta-VLDL to the LDL receptor-related protein. This is Apolipoprotein C-I (APOC1) from Panthera tigris altaica (Siberian tiger).